Reading from the N-terminus, the 217-residue chain is ATP synthase subunit 4, mitochondrial (217 aa).

Residues 1 to 14 constitute a mitochondrion transit peptide; it reads MPFARVGALSARHY. 2 consecutive transmembrane segments (helical) span residues 41 to 61 and 66 to 86; these read GVLATGVLGSIYAISNELYIV and IVLGVFAAFVVVVAKLGGPGY.

As to quaternary structure, F-type ATP synthases have 2 components, the catalytic core F(1) and the membrane-embedded component F(0), linked together by a central stalk and a peripheral stalk. The central stalk, also called rotor shaft, is often seen as part of F(1). The peripheral stalk is seen as part of F(0). F(0) contains the membrane channel next to the rotor. F-type ATP synthases form dimers but each monomer functions independently in ATP generation. The dimer consists of 17 different polypeptides: ATP1 (subunit alpha, 3 molecules per monomer, part of F(1)), ATP2 (subunit beta, 3 copies per monomer, part of F(1)), ATP3 (subunit gamma, part of the central stalk), ATP4 (subunit b, part of the peripheral stalk), ATP5/OSCP (subunit 5/OSCP, part of the peripheral stalk), ATP6 (subunit a, part of the peripheral stalk), ATP7 (subunit d, part of the peripheral stalk), ATP8 (subunit 8, part of the peripheral stalk), OLI1 (subunit c, part of the rotor, 10 molecules per monomer), ATP14 (subunit h, part of the peripheral stalk), ATP15 (subunit epsilon, part of the central stalk), ATP16 (subunit delta, part of the central stalk), ATP17 (subunit f, part of the peripheral stalk), ATP18 (subunit i/j, part of the peripheral stalk), ATP19 (subunit k, dimer-specific, at interface between monomers), ATP20 (subunit g, at interface between monomers), TIM11 (subunit e, at interface between monomers).

It is found in the mitochondrion inner membrane. Mitochondrial membrane ATP synthase (F(1)F(0) ATP synthase or Complex V) produces ATP from ADP in the presence of a proton gradient across the membrane which is generated by electron transport complexes of the respiratory chain. F-type ATP synthases consist of two structural domains, F(1) - containing the extramembraneous catalytic core, and F(0) - containing the membrane proton channel, linked together by a central stalk and a peripheral stalk. During catalysis, ATP synthesis in the catalytic domain of F(1) is coupled via a rotary mechanism of the central stalk subunits to proton translocation. Part of the complex F(0) domain and the peripheral stalk, which acts as a stator to hold the catalytic alpha/ATP1(3)beta/ATP2(3) subcomplex and subunit a/ATP6 static relative to the rotary elements. The sequence is that of ATP synthase subunit 4, mitochondrial from Yarrowia lipolytica (strain CLIB 122 / E 150) (Yeast).